Consider the following 212-residue polypeptide: Pyridoxine/pyridoxamine 5'-phosphate oxidase (212 aa).

FMN-binding positions include 59-64 (RMVLMK), 74-75 (YS), Lys-81, and Gln-103. Lys-64 is a substrate binding site. Substrate is bound by residues Tyr-121 and Arg-125. Residues 138–139 (QS) and Trp-183 contribute to the FMN site. 189–191 (RLH) lines the substrate pocket. Position 193 (Arg-193) interacts with FMN.

The protein belongs to the pyridoxamine 5'-phosphate oxidase family. Homodimer. FMN serves as cofactor.

It catalyses the reaction pyridoxamine 5'-phosphate + O2 + H2O = pyridoxal 5'-phosphate + H2O2 + NH4(+). The enzyme catalyses pyridoxine 5'-phosphate + O2 = pyridoxal 5'-phosphate + H2O2. It functions in the pathway cofactor metabolism; pyridoxal 5'-phosphate salvage; pyridoxal 5'-phosphate from pyridoxamine 5'-phosphate: step 1/1. The protein operates within cofactor metabolism; pyridoxal 5'-phosphate salvage; pyridoxal 5'-phosphate from pyridoxine 5'-phosphate: step 1/1. Its function is as follows. Catalyzes the oxidation of either pyridoxine 5'-phosphate (PNP) or pyridoxamine 5'-phosphate (PMP) into pyridoxal 5'-phosphate (PLP). This Rhodopseudomonas palustris (strain HaA2) protein is Pyridoxine/pyridoxamine 5'-phosphate oxidase.